The chain runs to 408 residues: Bone morphogenetic protein 4 (408 aa).

Positions 1–19 are cleaved as a signal peptide; the sequence is MIPGNRMLMVVLLCQVLLG. Positions 20–292 are excised as a propeptide; sequence GASHASLIPE…HTLTRRRAKR (273 aa). Serine 91 bears the Phosphoserine mark. A disordered region spans residues 91 to 111; that stretch reads SGEEEEEEQSQGTGLEYPERP. 2 N-linked (GlcNAc...) asparagine glycosylation sites follow: asparagine 144 and asparagine 209. The disordered stretch occupies residues 281 to 307; sequence RGHTLTRRRAKRSPKHHPQRSRKKNKN. Positions 284 to 307 are enriched in basic residues; it reads TLTRRRAKRSPKHHPQRSRKKNKN. 3 disulfide bridges follow: cysteine 308–cysteine 373, cysteine 337–cysteine 405, and cysteine 341–cysteine 407. Residues asparagine 350 and asparagine 365 are each glycosylated (N-linked (GlcNAc...) asparagine).

This sequence belongs to the TGF-beta family. In terms of assembly, homodimer; disulfide-linked. Interacts with SOSTDC1, GREM2, RGMA, RGMB and RGMC. Part of a complex consisting of TWSG1 and CHRD. Interacts with the serine proteases, HTRA1 and HTRA3; the interaction with either inhibits BMP4-mediated signaling. The HTRA protease activity is required for this inhibition. Interacts with FBN1 (via N-terminal domain) and FBN2. Interacts with type I receptor BMPR1A. Interacts with type II receptor BMPR2. Interacts with FSTL1; this interaction inhibits the activation of the BMP4/Smad1/5/8 signaling pathway. Interacts with SCUBE3. Interacts with TGFBR3. In the cochlea, detected in nonprosensory regions and outer sulcus (at protein level). Prior to gastrulation, expressed in the extraembryonic ectoderm. Later, expressed in the extraembryonic mesoderm.

The protein resides in the secreted. It is found in the extracellular space. It localises to the extracellular matrix. Growth factor of the TGF-beta superfamily that plays essential roles in many developmental processes, including neurogenesis, vascular development, angiogenesis and osteogenesis. Acts in concert with PTHLH/PTHRP to stimulate ductal outgrowth during embryonic mammary development and to inhibit hair follicle induction. Initiates the canonical BMP signaling cascade by associating with type I receptor BMPR1A and type II receptor BMPR2. Once all three components are bound together in a complex at the cell surface, BMPR2 phosphorylates and activates BMPR1A. In turn, BMPR1A propagates signal by phosphorylating SMAD1/5/8 that travel to the nucleus and act as activators and repressors of transcription of target genes. Positively regulates the expression of odontogenic development regulator MSX1 via inducing the IPO7-mediated import of SMAD1 to the nucleus. Required for MSX1-mediated mesenchymal molar tooth bud development beyond the bud stage, via promoting Wnt signaling. Acts as a positive regulator of odontoblast differentiation during mesenchymal tooth germ formation, expression is repressed during the bell stage by MSX1-mediated inhibition of CTNNB1 signaling. Able to induce its own expression in dental mesenchymal cells and also in the neighboring dental epithelial cells via an MSX1-mediated pathway. Can also signal through non-canonical BMP pathways such as ERK/MAP kinase, PI3K/Akt or SRC cascades. For example, induces SRC phosphorylation which, in turn, activates VEGFR2, leading to an angiogenic response. The polypeptide is Bone morphogenetic protein 4 (Mus musculus (Mouse)).